A 245-amino-acid chain; its full sequence is Aliphatic sulfonates import ATP-binding protein SsuB 2 (245 aa).

In terms of domain architecture, ABC transporter spans 15-229 (VAVRGLSRAF…DVADPEFARI (215 aa)). Residue 47-54 (GASGCGKS) participates in ATP binding.

The protein belongs to the ABC transporter superfamily. Aliphatic sulfonates importer (TC 3.A.1.17.2) family. The complex is composed of two ATP-binding proteins (SsuB), two transmembrane proteins (SsuC) and a solute-binding protein (SsuA).

The protein localises to the cell inner membrane. The enzyme catalyses ATP + H2O + aliphatic sulfonate-[sulfonate-binding protein]Side 1 = ADP + phosphate + aliphatic sulfonateSide 2 + [sulfonate-binding protein]Side 1.. Functionally, part of the ABC transporter complex SsuABC involved in aliphatic sulfonates import. Responsible for energy coupling to the transport system. This is Aliphatic sulfonates import ATP-binding protein SsuB 2 from Paracoccus denitrificans (strain Pd 1222).